We begin with the raw amino-acid sequence, 216 residues long: CASP-like protein 2U1 (216 aa).

The tract at residues 1 to 30 (MKQDTEMGEATNGYIGTPGTVPVSHAGNDS) is disordered. Topologically, residues 1 to 37 (MKQDTEMGEATNGYIGTPGTVPVSHAGNDSGMRRMRT) are cytoplasmic. Residues 38-58 (ASILMRLTAMALCVTALVTMV) traverse the membrane as a helical segment. Over 59–86 (TDKQTHYFNFASTTIVKTAEYTNVLALK) the chain is Extracellular. Residues 87–107 (VFVYTNGVIAGYSLLQALWTI) form a helical membrane-spanning segment. Over 108 to 128 (VAKSSYSTSKARLWTTFFLDQ) the chain is Cytoplasmic. The helical transmembrane segment at 129 to 148 (FIVYVLIGVTGAATEVAYIA) threads the bilayer. Topologically, residues 149–170 (EKGESDVAWPKQCNNFGRFCSQ) are extracellular. Residues 171–191 (VGASVIVCFVAILTLVFLAVL) traverse the membrane as a helical segment. Over 192 to 216 (SAKQLFIHERPSRTTRKDGYYTSNQ) the chain is Cytoplasmic.

Belongs to the Casparian strip membrane proteins (CASP) family. In terms of assembly, homodimer and heterodimers.

Its subcellular location is the cell membrane. The sequence is that of CASP-like protein 2U1 from Marchantia polymorpha (Common liverwort).